Here is a 470-residue protein sequence, read N- to C-terminus: Sorting nexin-17 (470 aa).

The region spanning 1–109 (MHFSIPETES…SFLRRAQQET (109 aa)) is the PX domain. Residues R36, S38, K62, and R75 each contribute to the a 1,2-diacyl-sn-glycero-3-phospho-(1D-myo-inositol-3-phosphate) site. Residues 115 to 206 (EEVSLEVLLS…YKIVLRKSYW (92 aa)) enclose the Ras-associating domain. Positions 115 to 432 (EEVSLEVLLS…DATRESMVKL (318 aa)) are FERM-like. Positions 270 to 432 (GYLRFDACVA…DATRESMVKL (163 aa)) are PTB-like F3 module. Residues S336, S407, S409, S415, S421, S437, and S440 each carry the phosphoserine modification. The segment at 400–425 (VGGTLRRSDSQQAVKSPPLLESPDAT) is disordered.

It belongs to the sorting nexin family. In terms of assembly, monomer. Interacts with APP (via cytoplasmic YXNPXY motif). Interacts with KIF1B. Interacts with the C-termini of P-selectin, PTC, LDLR, VLDLR, LRP1 and LRP8. Interacts with KRIT1 (via N-terminus). Interacts with HRAS. Interacts with ITGB1 and ITGB5 (via NPxY motif). Interacts with CCDC22 and CCDC93; the interaction associates SNX17 with the CCC complex. Interacts (via C-terminus) with VPS26C and VPS35L; the interactions are direct and associate SNX17 with the retriever complex.

The protein resides in the cytoplasm. It localises to the early endosome. It is found in the cytoplasmic vesicle membrane. Functionally, critical regulator of endosomal recycling of numerous surface proteins, including integrins, signaling receptor and channels. Binds to NPxY sequences in the cytoplasmic tails of target cargos. Associates with retriever and CCC complexes to prevent lysosomal degradation and promote cell surface recycling of numerous cargos such as integrins ITGB1, ITGB5 and their associated alpha subunits. Also required for maintenance of normal cell surface levels of APP and LRP1. Interacts with membranes containing phosphatidylinositol 3-phosphate (PtdIns(3P)). In Pongo abelii (Sumatran orangutan), this protein is Sorting nexin-17 (SNX17).